Reading from the N-terminus, the 1035-residue chain is Kinesin-like protein KIN-4A (1035 aa).

A Kinesin motor domain is found at 10–369 (CVKVAVHVRP…LKYANRARNI (360 aa)). An ATP-binding site is contributed by 89 to 96 (GQTGSGKT). Coiled coils occupy residues 380 to 437 (VADE…LRNH) and 498 to 702 (MLQD…RKSS). 3 disordered regions span residues 697–720 (EARK…HMTE), 766–787 (VMSG…NTLS), and 882–928 (HSES…PLSP). Composition is skewed to polar residues over residues 704–716 (RDNS…SPGS) and 778–787 (NGNSRANTLS). The stretch at 850-904 (NVAADARCQVREKEMEIKEMKEQMTELVTILRHSESRRRETEKQLKQREQAAVTA) forms a coiled coil. Over residues 882–898 (HSESRRRETEKQLKQRE) the composition is skewed to basic and acidic residues. A compositionally biased stretch (polar residues) spans 902-926 (VTATTSPGNGNGSVKHSADDSNTPL). The short motif at 971–987 (KKVSIAGQSGKLWRWKR) is the Nuclear localization signal element. A disordered region spans residues 1014-1035 (DETMTRTRPRPQLLPHRPQRVM).

It belongs to the TRAFAC class myosin-kinesin ATPase superfamily. Kinesin family. KIN-4 subfamily. In terms of assembly, homodimer. Expressed in young tissues with cell divisions, including initiating adventitious roots, primary root tips, flower primordia, intercalary meristems, sub-epidermal regions of young culms and panicles.

The protein resides in the nucleus. It is found in the cytoplasm. Its subcellular location is the cytoskeleton. With respect to regulation, may be regulated by cyclin-dependent kinase A. Microtubule-dependent motor protein involved in the control of the oriented deposition of cellulose microfibrils. Involved in wall biogenesis and modification, and contributes to cell-cycle progression and cell division. Acts as a transcriptional activator in gibberellic acid (GA) biosynthesis pathway. Binds specifically to the DNA sequence 5'-ACCAACTTGAA-3' of the ent-kaurene oxidase 2 (CYP701A6 or OsKO2) promoter. May regulate CYP701A6 gene expression and mediates cell elongation by regulating the GA biosynthesis pathway. The polypeptide is Kinesin-like protein KIN-4A (Oryza sativa subsp. japonica (Rice)).